A 93-amino-acid polypeptide reads, in one-letter code: DNA-directed RNA polymerase subunit Rpo11 (93 aa).

It belongs to the archaeal Rpo11/eukaryotic RPB11/RPC19 RNA polymerase subunit family. Part of the RNA polymerase complex.

Its subcellular location is the cytoplasm. It carries out the reaction RNA(n) + a ribonucleoside 5'-triphosphate = RNA(n+1) + diphosphate. In terms of biological role, DNA-dependent RNA polymerase (RNAP) catalyzes the transcription of DNA into RNA using the four ribonucleoside triphosphates as substrates. This Sulfurisphaera tokodaii (strain DSM 16993 / JCM 10545 / NBRC 100140 / 7) (Sulfolobus tokodaii) protein is DNA-directed RNA polymerase subunit Rpo11.